Consider the following 327-residue polypeptide: Zinc transport protein ZntB (327 aa).

Topologically, residues 1-273 are cytoplasmic; sequence MEAIKGSDVN…ARRTYTMSLM (273 aa). The helical transmembrane segment at 274-294 threads the bilayer; it reads AMVFLPSTFLTGLFGVNLGGI. Residues 295–300 lie on the Periplasmic side of the membrane; it reads PGGGWR. The chain crosses the membrane as a helical span at residues 301-321; that stretch reads FGFSLFCILLVVLIGGVTLWL. Topologically, residues 322-327 are cytoplasmic; it reads HRSKWL.

Belongs to the CorA metal ion transporter (MIT) (TC 1.A.35) family.

The protein localises to the cell inner membrane. It catalyses the reaction Zn(2+)(out) + H(+)(out) = Zn(2+)(in) + H(+)(in). Functionally, zinc transporter. Acts as a Zn(2+):proton symporter, which likely mediates zinc ion uptake. This is Zinc transport protein ZntB from Salmonella choleraesuis (strain SC-B67).